The primary structure comprises 352 residues: MKVKAPGRVNLIGEHTDYNDGFVLPFAIDRYVELEIEESDKFCFYSNNLNEEVKLSSLQKTNSWADYIVGVIKEIEKRGYKIQPVKIKVDSNIPIGAGLSSSAALEVASAYAISEYFGLNLSKIDIVKISREAEANFVGVNCGIMDQFASAFSKKDYAIFLDTMTLDFQFVPLNLKGYEIFVIDSNVKHELSSSEYNLRRQECESALEIIGKDSFRNVTREDLKLLNGGTLLKRVQHILEENERVLKTVKALKENEIERIGEYLYQSHESLRYLYEVSCDETDFIVDFLKEKDGIIGARMVGGGFGGGVIVISKEGSFESIEKLLENEYYSRFGIRPTFYKLNSSDGVTKIK.

14 to 17 (EHTD) is a binding site for substrate. Residues Ser-46 and 96–102 (GAGLSSS) each bind ATP. Mg(2+)-binding residues include Ser-102 and Glu-134. Asp-146 acts as the Proton acceptor in catalysis. Substrate is bound at residue Tyr-196.

This sequence belongs to the GHMP kinase family. GalK subfamily.

Its subcellular location is the cytoplasm. The catalysed reaction is alpha-D-galactose + ATP = alpha-D-galactose 1-phosphate + ADP + H(+). Its pathway is carbohydrate metabolism; galactose metabolism. Its function is as follows. Catalyzes the transfer of the gamma-phosphate of ATP to D-galactose to form alpha-D-galactose-1-phosphate (Gal-1-P). This Thermosipho africanus (strain TCF52B) protein is Galactokinase.